The sequence spans 547 residues: Chaperonin GroEL (547 aa).

ATP contacts are provided by residues Thr30–Pro33, Lys51, Asp87–Thr91, Gly415, and Asp495.

It belongs to the chaperonin (HSP60) family. As to quaternary structure, forms a cylinder of 14 subunits composed of two heptameric rings stacked back-to-back. Interacts with the co-chaperonin GroES.

The protein localises to the cytoplasm. The enzyme catalyses ATP + H2O + a folded polypeptide = ADP + phosphate + an unfolded polypeptide.. Its function is as follows. Together with its co-chaperonin GroES, plays an essential role in assisting protein folding. The GroEL-GroES system forms a nano-cage that allows encapsulation of the non-native substrate proteins and provides a physical environment optimized to promote and accelerate protein folding. In Thiobacillus denitrificans (strain ATCC 25259 / T1), this protein is Chaperonin GroEL.